The sequence spans 310 residues: Methionyl-tRNA formyltransferase (310 aa).

(6S)-5,6,7,8-tetrahydrofolate is bound at residue 109–112 (SLLP).

This sequence belongs to the Fmt family.

The catalysed reaction is L-methionyl-tRNA(fMet) + (6R)-10-formyltetrahydrofolate = N-formyl-L-methionyl-tRNA(fMet) + (6S)-5,6,7,8-tetrahydrofolate + H(+). Functionally, attaches a formyl group to the free amino group of methionyl-tRNA(fMet). The formyl group appears to play a dual role in the initiator identity of N-formylmethionyl-tRNA by promoting its recognition by IF2 and preventing the misappropriation of this tRNA by the elongation apparatus. This Pseudomonas paraeruginosa (strain DSM 24068 / PA7) (Pseudomonas aeruginosa (strain PA7)) protein is Methionyl-tRNA formyltransferase.